Consider the following 245-residue polypeptide: DNA repair protein RecO (245 aa).

This sequence belongs to the RecO family.

Functionally, involved in DNA repair and RecF pathway recombination. This Erwinia tasmaniensis (strain DSM 17950 / CFBP 7177 / CIP 109463 / NCPPB 4357 / Et1/99) protein is DNA repair protein RecO.